Here is a 370-residue protein sequence, read N- to C-terminus: Cobalt-precorrin-5B C(1)-methyltransferase (370 aa).

The protein belongs to the CbiD family.

The catalysed reaction is Co-precorrin-5B + S-adenosyl-L-methionine = Co-precorrin-6A + S-adenosyl-L-homocysteine. It functions in the pathway cofactor biosynthesis; adenosylcobalamin biosynthesis; cob(II)yrinate a,c-diamide from sirohydrochlorin (anaerobic route): step 6/10. In terms of biological role, catalyzes the methylation of C-1 in cobalt-precorrin-5B to form cobalt-precorrin-6A. This is Cobalt-precorrin-5B C(1)-methyltransferase from Nostoc sp. (strain PCC 7120 / SAG 25.82 / UTEX 2576).